The following is an 851-amino-acid chain: DNA mismatch repair protein MutS (851 aa).

602–609 provides a ligand contact to ATP; it reads GPNMSGKS.

It belongs to the DNA mismatch repair MutS family.

Functionally, this protein is involved in the repair of mismatches in DNA. It is possible that it carries out the mismatch recognition step. This protein has a weak ATPase activity. The polypeptide is DNA mismatch repair protein MutS (Streptococcus pyogenes serotype M4 (strain MGAS10750)).